Here is a 243-residue protein sequence, read N- to C-terminus: Orotidine 5'-phosphate decarboxylase (243 aa).

Substrate-binding positions include aspartate 19, lysine 41, 69–78, threonine 124, arginine 185, glutamine 194, glycine 214, and arginine 215; that span reads DLKFFDIPAT. Lysine 71 (proton donor) is an active-site residue.

This sequence belongs to the OMP decarboxylase family. Type 1 subfamily. Homodimer.

It carries out the reaction orotidine 5'-phosphate + H(+) = UMP + CO2. Its pathway is pyrimidine metabolism; UMP biosynthesis via de novo pathway; UMP from orotate: step 2/2. In terms of biological role, catalyzes the decarboxylation of orotidine 5'-monophosphate (OMP) to uridine 5'-monophosphate (UMP). In Xanthomonas campestris pv. campestris (strain 8004), this protein is Orotidine 5'-phosphate decarboxylase.